Reading from the N-terminus, the 241-residue chain is Large ribosomal subunit protein bL25 (241 aa).

Residues Leu214 to Gln241 form a disordered region.

The protein belongs to the bacterial ribosomal protein bL25 family. CTC subfamily. Part of the 50S ribosomal subunit; part of the 5S rRNA/L5/L18/L25 subcomplex. Contacts the 5S rRNA. Binds to the 5S rRNA independently of L5 and L18.

This is one of the proteins that binds to the 5S RNA in the ribosome where it forms part of the central protuberance. The polypeptide is Large ribosomal subunit protein bL25 (Deinococcus geothermalis (strain DSM 11300 / CIP 105573 / AG-3a)).